Consider the following 2195-residue polypeptide: Genome polyprotein (2195 aa).

Glycine 2 is lipidated: N-myristoyl glycine; by host. Residues 2–1505 are Cytoplasmic-facing; that stretch reads GAQVSTQKTG…HVSRAFICLQ (1504 aa). The interval 567–583 is amphipathic alpha-helix; that stretch reads LLQGDVVEAVENAVARV. Catalysis depends on for protease 2A activity residues histidine 882 and aspartate 900. 2 residues coordinate Zn(2+): cysteine 917 and cysteine 919. Cysteine 971 serves as the catalytic For protease 2A activity. Cysteine 977 and histidine 979 together coordinate Zn(2+). Residues 1111–1183 are membrane-binding; it reads NNGWLKKFTE…EQSAPSQSDQ (73 aa). Positions 1111–1249 are oligomerization; sequence NNGWLKKFTE…SPGAGKSVAT (139 aa). The segment at 1132 to 1136 is RNA-binding; the sequence is SIKIQ. One can recognise an SF3 helicase domain in the interval 1215–1371; the sequence is EKKMSNYIQF…SMYSQNGKIN (157 aa). Cysteine 1379, cysteine 1391, and cysteine 1396 together coordinate Zn(2+). The C4-type; degenerate zinc finger occupies 1379–1396; it reads CDEECCPVNFKRCCPLVC. Positions 1423–1430 are RNA-binding; that stretch reads EYNHRHSV. An oligomerization region spans residues 1434–1439; it reads LEALFQ. An intramembrane segment occupies 1506 to 1521; sequence ALTTFVSVAGIIYIIY. The Cytoplasmic segment spans residues 1522-2195; it reads KLFAGFQGAY…TLRRKWLDSF (674 aa). Tyrosine 1531 carries the O-(5'-phospho-RNA)-tyrosine modification. A Peptidase C3 domain is found at 1551–1729; that stretch reads GPAFEFAVAM…FSAALLKHYF (179 aa). Residues histidine 1590, glutamate 1621, and cysteine 1697 each act as for protease 3C activity in the active site. The 117-residue stretch at 1960 to 2076 folds into the RdRp catalytic domain; the sequence is GHLIAFDYSG…SYPWPIDASL (117 aa). Mg(2+)-binding residues include aspartate 1966 and aspartate 2062.

This sequence belongs to the picornaviruses polyprotein family. Interacts with capsid protein VP1 and capsid protein VP3 to form heterotrimeric protomers. As to quaternary structure, interacts with capsid protein VP0, and capsid protein VP3 to form heterotrimeric protomers. Five protomers subsequently associate to form pentamers which serve as building blocks for the capsid. Interacts with capsid protein VP2, capsid protein VP3 and capsid protein VP4 following cleavage of capsid protein VP0. In terms of assembly, interacts with capsid protein VP1 and capsid protein VP3 in the mature capsid. Interacts with capsid protein VP0 and capsid protein VP1 to form heterotrimeric protomers. Five protomers subsequently associate to form pentamers which serve as building blocks for the capsid. Interacts with capsid protein VP4 in the mature capsid. Interacts with protein 2C; this interaction may be important for virion morphogenesis. As to quaternary structure, interacts with capsid protein VP1 and capsid protein VP3. In terms of assembly, homodimer. Homohexamer; forms a hexameric ring structure with 6-fold symmetry characteristic of AAA+ ATPases. Interacts (via N-terminus) with host RTN3 (via reticulon domain); this interaction is important for viral replication. Interacts with capsid protein VP3; this interaction may be important for virion morphogenesis. As to quaternary structure, interacts with protein 3CD. In terms of assembly, homodimer. Interacts with host GBF1. Interacts (via GOLD domain) with host ACBD3 (via GOLD domain); this interaction allows the formation of a viral protein 3A/ACBD3 heterotetramer with a 2:2 stoichiometry, which will stimulate the recruitment of host PI4KB in order to synthesize PI4P at the viral RNA replication sites. Interacts with RNA-directed RNA polymerase. As to quaternary structure, interacts with protein 3AB and with RNA-directed RNA polymerase. In terms of assembly, interacts with Viral protein genome-linked and with protein 3CD. Requires Mg(2+) as cofactor. In terms of processing, specific enzymatic cleavages in vivo by the viral proteases yield processing intermediates and the mature proteins. Myristoylation is required for the formation of pentamers during virus assembly. Further assembly of 12 pentamers and a molecule of genomic RNA generates the provirion. Post-translationally, during virion maturation, immature virions are rendered infectious following cleavage of VP0 into VP4 and VP2. This maturation seems to be an autocatalytic event triggered by the presence of RNA in the capsid and it is followed by a conformational change infectious virion. In terms of processing, myristoylation is required during RNA encapsidation and formation of the mature virus particle. VPg is uridylylated by the polymerase into VPg-pUpU. This acts as a nucleotide-peptide primer for the genomic RNA replication.

The protein resides in the virion. The protein localises to the host cytoplasm. Its subcellular location is the host cytoplasmic vesicle membrane. It is found in the host nucleus. The enzyme catalyses a ribonucleoside 5'-triphosphate + H2O = a ribonucleoside 5'-diphosphate + phosphate + H(+). It catalyses the reaction Selective cleavage of Tyr-|-Gly bond in the picornavirus polyprotein.. The catalysed reaction is RNA(n) + a ribonucleoside 5'-triphosphate = RNA(n+1) + diphosphate. It carries out the reaction Selective cleavage of Gln-|-Gly bond in the poliovirus polyprotein. In other picornavirus reactions Glu may be substituted for Gln, and Ser or Thr for Gly.. Replication or transcription is subject to high level of random mutations by the nucleotide analog ribavirin. Functionally, forms an icosahedral capsid of pseudo T=3 symmetry with capsid proteins VP2 and VP3. The capsid is 300 Angstroms in diameter, composed of 60 copies of each capsid protein and enclosing the viral positive strand RNA genome. Capsid protein VP1 mainly forms the vertices of the capsid. Capsid protein VP1 interacts with host cell receptor to provide virion attachment to target host cells. This attachment induces virion internalization. Tyrosine kinases are probably involved in the entry process. After binding to its receptor, the capsid undergoes conformational changes. Capsid protein VP1 N-terminus (that contains an amphipathic alpha-helix) and capsid protein VP4 are externalized. Together, they shape a pore in the host membrane through which viral genome is translocated to host cell cytoplasm. In terms of biological role, forms an icosahedral capsid of pseudo T=3 symmetry with capsid proteins VP2 and VP3. The capsid is 300 Angstroms in diameter, composed of 60 copies of each capsid protein and enclosing the viral positive strand RNA genome. Its function is as follows. Lies on the inner surface of the capsid shell. After binding to the host receptor, the capsid undergoes conformational changes. Capsid protein VP4 is released, Capsid protein VP1 N-terminus is externalized, and together, they shape a pore in the host membrane through which the viral genome is translocated into the host cell cytoplasm. Component of immature procapsids, which is cleaved into capsid proteins VP4 and VP2 after maturation. Allows the capsid to remain inactive before the maturation step. Functionally, cysteine protease that cleaves viral polyprotein and specific host proteins. It is responsible for the autocatalytic cleavage between the P1 and P2 regions, which is the first cleavage occurring in the polyprotein. Also cleaves the host translation initiation factor EIF4G1, in order to shut down the capped cellular mRNA translation. Inhibits the host nucleus-cytoplasm protein and RNA trafficking by cleaving host members of the nuclear pores. Counteracts stress granule formation probably by antagonizing its assembly or promoting its dissassembly. In terms of biological role, plays an essential role in the virus replication cycle by acting as a viroporin. Creates a pore in the host endoplasmic reticulum and as a consequence releases Ca2+ in the cytoplasm of infected cell. In turn, high levels of cytoplasmic calcium may trigger membrane trafficking and transport of viral ER-associated proteins to viroplasms, sites of viral genome replication. Its function is as follows. Induces and associates with structural rearrangements of intracellular membranes. Displays RNA-binding, nucleotide binding and NTPase activities. May play a role in virion morphogenesis and viral RNA encapsidation by interacting with the capsid protein VP3. Localizes the viral replication complex to the surface of membranous vesicles. Together with protein 3CD binds the Cis-Active RNA Element (CRE) which is involved in RNA synthesis initiation. Acts as a cofactor to stimulate the activity of 3D polymerase, maybe through a nucleid acid chaperone activity. Functionally, localizes the viral replication complex to the surface of membranous vesicles. It inhibits host cell endoplasmic reticulum-to-Golgi apparatus transport and causes the disassembly of the Golgi complex, possibly through GBF1 interaction. This would result in depletion of MHC, trail receptors and IFN receptors at the host cell surface. Plays an essential role in viral RNA replication by recruiting ACBD3 and PI4KB at the viral replication sites, thereby allowing the formation of the rearranged membranous structures where viral replication takes place. In terms of biological role, acts as a primer for viral RNA replication and remains covalently bound to viral genomic RNA. VPg is uridylylated prior to priming replication into VPg-pUpU. The oriI viral genomic sequence may act as a template for this. The VPg-pUpU is then used as primer on the genomic RNA poly(A) by the RNA-dependent RNA polymerase to replicate the viral genome. During genome replication, the VPg-RNA linkage is removed by the host TDP2, thereby accelerating replication. During the late stage of the replication cycle, host TDP2 is excluded from sites of viral RNA synthesis and encapsidation, allowing for the generation of progeny virions. Its function is as follows. Involved in the viral replication complex and viral polypeptide maturation. It exhibits protease activity with a specificity and catalytic efficiency that is different from protease 3C. Protein 3CD lacks polymerase activity. The 3C domain in the context of protein 3CD may have an RNA binding activity. Protein 3CD binds to the 5'UTR of the viral genome. Replicates the viral genomic RNA on the surface of intracellular membranes. May form linear arrays of subunits that propagate along a strong head-to-tail interaction called interface-I. Covalently attaches UMP to a tyrosine of VPg, which is used to prime RNA synthesis. The positive stranded RNA genome is first replicated at virus induced membranous vesicles, creating a dsRNA genomic replication form. This dsRNA is then used as template to synthesize positive stranded RNA genomes. ss(+)RNA genomes are either translated, replicated or encapsidated. Functionally, major viral protease that mediates proteolytic processing of the polyprotein. Cleaves host EIF5B, contributing to host translation shutoff. Also cleaves host PABPC1, contributing to host translation shutoff. Cleaves host NLRP1, triggers host N-glycine-mediated degradation of the autoinhibitory NLRP1 N-terminal fragment. This chain is Genome polyprotein, found in Echovirus 11 (strain Gregory).